The sequence spans 379 residues: MARVGPGRAGVSCQGRGRGRGGSGQRRPPTWEISDSDAEDSAGSEAAARARDPAGERRAAAEALRLLRPEQVLKRLAVCVDTAILEDAGADVLMEALEALGCECRIEPQRPARSLRWTRASPDPCPRSLPPEVWAAGEQELLLLLEPEEFLQGVATLTQISGPTHWVPWISPETTARPHLAVIGLDAYLWSRQHVSRGTQQPESPKVAGAEVAVSWPEVEEALVLLQLWANLDVLLVASWQELSRHVCAVTKALAQYPLKQYRESQAFSFCTAGRWAAGEPVARDGAGLQAAWRRQIRQFSRVSPAVADAVVTAFPSPRLLQQALEACSTERERMGLLADLPVPPSEGGRPRRVGPDLSRRICLFLTTANPDLLLDLGS.

The tract at residues 1-55 (MARVGPGRAGVSCQGRGRGRGGSGQRRPPTWEISDSDAEDSAGSEAAARARDPAG) is disordered. A nuclease-like domain; forms the post-nick DNA binding interface and is involved in DNA recognition and bending region spans residues 50 to 266 (ARDPAGERRA…YPLKQYRESQ (217 aa)). The helix-hairpin-helix (2HhH); forms the pre-nick DNA binding interface and is involved in DNA recognition and bending stretch occupies residues 288–379 (GLQAAWRRQI…NPDLLLDLGS (92 aa)).

It belongs to the EME1/MMS4 family. In terms of assembly, part of the heterodimeric MUS81-EME2 complex; the complex forms specifically during the DNA replication phase of the cell cycle.

It is found in the nucleus. Non-catalytic subunit of the structure-specific, heterodimeric DNA endonuclease MUS81-EME2 which is involved in the maintenance of genome stability. In the complex, EME2 is required for DNA cleavage, participating in DNA recognition and bending. MUS81-EME2 cleaves 3'-flaps and nicked Holliday junctions, and exhibit limited endonuclease activity with 5' flaps and nicked double-stranded DNAs. MUS81-EME2 which is active during the replication of DNA is more specifically involved in replication fork processing. Replication forks frequently encounter obstacles to their passage, including DNA base lesions, DNA interstrand cross-links, difficult-to-replicate sequences, transcription bubbles, or tightly bound proteins. One mechanism for the restart of a stalled replication fork involves nucleolytic cleavage mediated by the MUS81-EME2 endonuclease. By acting upon the stalled fork, MUS81-EME2 generates a DNA double-strand break (DSB) that can be repaired by homologous recombination, leading to the restoration of an active fork. MUS81-EME2 could also function in telomere maintenance. The chain is Structure-specific endonuclease subunit EME2 from Homo sapiens (Human).